The chain runs to 301 residues: tRNA (guanine-N(7)-)-methyltransferase (301 aa).

The tract at residues 1–26 (MSETPDSPRPVTPGSQASFGTYGGRP) is disordered. Residues glutamate 85, glutamate 110, asparagine 137, and aspartate 160 each contribute to the S-adenosyl-L-methionine site. The active site involves aspartate 160. Positions 164 and 196 each coordinate substrate. The tract at residues 244-270 (APVREGRAPVSTEHTGPNEGVDEEGGW) is disordered. Residue 280–283 (TSFE) coordinates substrate.

This sequence belongs to the class I-like SAM-binding methyltransferase superfamily. TrmB family.

The enzyme catalyses guanosine(46) in tRNA + S-adenosyl-L-methionine = N(7)-methylguanosine(46) in tRNA + S-adenosyl-L-homocysteine. It functions in the pathway tRNA modification; N(7)-methylguanine-tRNA biosynthesis. Functionally, catalyzes the formation of N(7)-methylguanine at position 46 (m7G46) in tRNA. In Paenarthrobacter aurescens (strain TC1), this protein is tRNA (guanine-N(7)-)-methyltransferase.